A 503-amino-acid polypeptide reads, in one-letter code: ATP synthase subunit alpha (503 aa).

An ATP-binding site is contributed by 170 to 177 (GDRKTGKT).

It belongs to the ATPase alpha/beta chains family. In terms of assembly, F-type ATPases have 2 components, CF(1) - the catalytic core - and CF(0) - the membrane proton channel. CF(1) has five subunits: alpha(3), beta(3), gamma(1), delta(1), epsilon(1). CF(0) has four main subunits: a(1), b(1), b'(1) and c(9-12).

It localises to the cellular thylakoid membrane. The enzyme catalyses ATP + H2O + 4 H(+)(in) = ADP + phosphate + 5 H(+)(out). In terms of biological role, produces ATP from ADP in the presence of a proton gradient across the membrane. The alpha chain is a regulatory subunit. This Synechocystis sp. (strain ATCC 27184 / PCC 6803 / Kazusa) protein is ATP synthase subunit alpha.